Reading from the N-terminus, the 143-residue chain is Transcriptional regulator MraZ (143 aa).

SpoVT-AbrB domains are found at residues 5 to 47 and 76 to 119; these read EYQH…PQDE and ATEC…SKER.

It belongs to the MraZ family. In terms of assembly, forms oligomers.

Its subcellular location is the cytoplasm. The protein localises to the nucleoid. The polypeptide is Transcriptional regulator MraZ (Brevibacillus brevis (strain 47 / JCM 6285 / NBRC 100599)).